A 244-amino-acid chain; its full sequence is CTD nuclear envelope phosphatase 1 (244 aa).

The helical transmembrane segment at 7–29 threads the bilayer; sequence LLGLRGFVAFAAKLWSFVLYLLR. Residues 57–224 enclose the FCP1 homology domain; sequence SQVKRKVLVL…LNLLPMLDAL (168 aa).

This sequence belongs to the dullard family. Interacts with bmpr1a, bmpr1b and bmpr2.

It is found in the membrane. The protein localises to the cytoplasm. The protein resides in the perinuclear region. The enzyme catalyses O-phospho-L-seryl-[protein] + H2O = L-seryl-[protein] + phosphate. The catalysed reaction is O-phospho-L-threonyl-[protein] + H2O = L-threonyl-[protein] + phosphate. Functionally, serine/threonine protein phosphatase that may dephosphorylate and activate lipins. Lipins are phosphatidate phosphatases that catalyze the conversion of phosphatidic acid to diacylglycerol and control the metabolism of fatty acids at different levels. May indirectly modulate the lipid composition of nuclear and/or endoplasmic reticulum membranes and be required for proper nuclear membrane morphology and/or dynamics. May also indirectly regulate the production of lipid droplets and triacylglycerol. Induces neuronal differentiation by antagonizing BMP signaling. Acts both by dephosphorylating BMPR1A and by promoting BMPR2 proteasomal degradation. The polypeptide is CTD nuclear envelope phosphatase 1 (ctdnep1) (Xenopus tropicalis (Western clawed frog)).